The following is a 172-amino-acid chain: MAPLQPGDSFPANVVFSYIPPTGSLDLTVCGRPIEYNASEALAKGTSVLVAVPGAFTPTCQEKHVTGFIAKLDQLRQAGVDRVLFIASNDAFVMSAWGKANGIKDESILFLSDSDTAFSSSIGWANAGRTGRYAIVVKDGKVVYAAVDTVRGSTEKSGVDAVLTVLGNQGKL.

Residues 4–171 enclose the Thioredoxin domain; it reads LQPGDSFPAN…VLTVLGNQGK (168 aa). K44 is covalently cross-linked (Glycyl lysine isopeptide (Lys-Gly) (interchain with G-Cter in URM1)). C60 functions as the Cysteine sulfenic acid (-SOH) intermediate in the catalytic mechanism. Residue C60 is modified to Cysteine persulfide. Glycyl lysine isopeptide (Lys-Gly) (interchain with G-Cter in URM1) cross-links involve residues K63, K99, K141, K156, and K171.

The protein belongs to the peroxiredoxin family. Prx5 subfamily. Homodimer; disulfide-linked, upon oxidation. Conjugated to URM1, a ubiquitin-like protein, in response to oxidative stresses. The attachment of URM1 to lysine residues exclusively depends on the presence of a peroxidatic cysteine in the target protein, with low specificity for the particular residue, motif, or structural context at which urmylation can occur. The URM1-conjugation reaction is mechanistically and directly coupled to the process of cysteine persulfidation, transfering the sulfur atom of the URM1 thiocarboxyl group to redox-active cysteine residues in the target protein if it is exposed to oxidative conditions. Post-translationally, persulfidated on specific redox-active cysteine residues. Persulfidation (also called protein S-sulfhydration) may provide a molecular mechanism that enables cells to protect vulnerable cysteine residues from reactive oxygen species (ROS) under stress conditions.

It localises to the cytoplasm. It carries out the reaction a hydroperoxide + [thioredoxin]-dithiol = an alcohol + [thioredoxin]-disulfide + H2O. In terms of biological role, thiol-specific peroxidase that catalyzes the reduction of hydrogen peroxide and organic hydroperoxides to water and alcohols, respectively. Plays a role in cell protection against oxidative stress by detoxifying peroxides and as sensor of hydrogen peroxide-mediated signaling events. Preferentially eliminates organic peroxides rather than hydrogen peroxide. Relays alkyl hydroperoxides as a signal to the transcription factor CAD1/YAP2 by inducing the formation of intramolecular disulfide bonds in CAD1, which causes its nuclear accumulation and activation. Involved in cellular Mn(2+) homeostasis. The polypeptide is Peroxiredoxin AHP1 (AHP1) (Chaetomium thermophilum (strain DSM 1495 / CBS 144.50 / IMI 039719) (Thermochaetoides thermophila)).